The chain runs to 576 residues: Low-affinity glucose transporter HXT4 (576 aa).

Positions 1–56 are disordered; it reads MSEEAAYQEDTAVQNTPADALSPVESDSNSALSTPSNKAERDDMKDFDENHEESNN. At 1–66 the chain is on the cytoplasmic side; sequence MSEEAAYQED…YVEIPKKPAS (66 aa). Residues 25–37 are compositionally biased toward polar residues; it reads ESDSNSALSTPSN. Over residues 38–54 the composition is skewed to basic and acidic residues; that stretch reads KAERDDMKDFDENHEES. Lysine 45 is covalently cross-linked (Glycyl lysine isopeptide (Lys-Gly) (interchain with G-Cter in ubiquitin)). The helical transmembrane segment at 67-87 threads the bilayer; that stretch reads AYVTVSICCLMVAFGGFVFGW. At 88 to 122 the chain is on the extracellular side; it reads DTGTISGFVAQTDFIRRFGMKHHDGTYYLSKVRTG. A helical transmembrane segment spans residues 123-143; that stretch reads LIVSIFNIGCAIGGIILARLG. Residues 144–149 lie on the Cytoplasmic side of the membrane; the sequence is DMYGRK. Residues 150-170 traverse the membrane as a helical segment; it reads MGLIVVVVIYIIGIIIQIASI. The Extracellular segment spans residues 171–180; the sequence is NKWYQYFIGR. The helical transmembrane segment at 181 to 201 threads the bilayer; that stretch reads IISGLGVGGIAVLSPMLISEV. Residues 202–207 lie on the Cytoplasmic side of the membrane; that stretch reads SPKHIR. The chain crosses the membrane as a helical span at residues 208 to 228; sequence GTLVSCYQLMITLGIFLGYCT. The Extracellular portion of the chain corresponds to 229–242; that stretch reads NYGTKTYTNSVQWR. The helical transmembrane segment at 243-263 threads the bilayer; that stretch reads VPLGLGFAWALFMIGGMTFVP. Over 264–346 the chain is Cytoplasmic; sequence ESPRYLVEVG…IQSLQQLTGD (83 aa). Residues 347 to 363 traverse the membrane as a helical segment; the sequence is NYFFYYGTTVFTAVGLE. The Extracellular portion of the chain corresponds to 364–369; sequence DSFETS. A helical transmembrane segment spans residues 370–387; the sequence is IVLGIVNFASTFVGIFLV. Over 388–394 the chain is Cytoplasmic; that stretch reads ERYGRRR. Residues 395–415 traverse the membrane as a helical segment; that stretch reads CLLWGAASMTACMVVFASVGV. The Extracellular portion of the chain corresponds to 416 to 437; it reads TRLWPNGKKNGSSKGAGNCMIV. Asparagine 425 carries an N-linked (GlcNAc...) asparagine glycan. A helical membrane pass occupies residues 438–458; it reads FTCFYLFCFATTWAPIPFVVN. At 459–475 the chain is on the cytoplasmic side; sequence SETFPLRVKSKCMAIAQ. The helical transmembrane segment at 476–496 threads the bilayer; it reads ACNWIWGFLIGFFTPFISGAI. A topological domain (extracellular) is located at residue aspartate 497. The chain crosses the membrane as a helical span at residues 498 to 518; that stretch reads FYYGYVFMGCLVFSYFYVFFF. Over 519–576 the chain is Cytoplasmic; that stretch reads VPETKGLTLEEVNTLWEEGVLPWKSPSWVPPNKRGTDYNADDLMHDDQPFYKKMFGKK.

Belongs to the major facilitator superfamily. Sugar transporter (TC 2.A.1.1) family.

Its subcellular location is the cell membrane. Its activity is regulated as follows. Xylose uptake is strongly inhibited by glucose. In terms of biological role, low-affinity glucose transporter. Can also transport xylose. The sequence is that of Low-affinity glucose transporter HXT4 (HXT4) from Saccharomyces cerevisiae (strain YJM789) (Baker's yeast).